The following is a 271-amino-acid chain: Diaminopimelate epimerase (271 aa).

Residues asparagine 13, glutamine 46, and asparagine 66 each contribute to the substrate site. The Proton donor role is filled by cysteine 75. Residues 76–77 (GN), asparagine 155, asparagine 188, and 206–207 (ER) each bind substrate. The active-site Proton acceptor is cysteine 215. 216 to 217 (GS) contacts substrate.

It belongs to the diaminopimelate epimerase family. As to quaternary structure, homodimer.

Its subcellular location is the cytoplasm. The enzyme catalyses (2S,6S)-2,6-diaminopimelate = meso-2,6-diaminopimelate. It participates in amino-acid biosynthesis; L-lysine biosynthesis via DAP pathway; DL-2,6-diaminopimelate from LL-2,6-diaminopimelate: step 1/1. Its function is as follows. Catalyzes the stereoinversion of LL-2,6-diaminopimelate (L,L-DAP) to meso-diaminopimelate (meso-DAP), a precursor of L-lysine and an essential component of the bacterial peptidoglycan. In Vesicomyosocius okutanii subsp. Calyptogena okutanii (strain HA), this protein is Diaminopimelate epimerase.